Consider the following 351-residue polypeptide: Photosystem II D2 protein (351 aa).

The chain crosses the membrane as a helical span at residues 39-59 (TAYLAIGGWLTGTTFVTSWYT). His-116 lines the chlorophyll a pocket. The chain crosses the membrane as a helical span at residues 123-139 (GFMLRQFELARLIGIRP). Residues Gln-128 and Asn-141 each contribute to the pheophytin a site. A helical transmembrane segment spans residues 151 to 164 (VFVSVFLLYPLGQS). His-196 is a chlorophyll a binding site. The helical transmembrane segment at 206–226 (GALLSAIHGVTVENTLYEDGE) threads the bilayer. His-213 and Phe-260 together coordinate a plastoquinone. His-213 lines the Fe cation pocket. A Fe cation-binding site is contributed by His-267. Residues 277–293 (GLWTSSIGIIGLALNLR) form a helical membrane-spanning segment.

This sequence belongs to the reaction center PufL/M/PsbA/D family. PSII is composed of 1 copy each of membrane proteins PsbA, PsbB, PsbC, PsbD, PsbE, PsbF, PsbH, PsbI, PsbJ, PsbK, PsbL, PsbM, PsbT, PsbX, PsbY, PsbZ, Psb30/Ycf12, peripheral proteins PsbO, CyanoQ (PsbQ), PsbU, PsbV and a large number of cofactors. It forms dimeric complexes. The cofactor is The D1/D2 heterodimer binds P680, chlorophylls that are the primary electron donor of PSII, and subsequent electron acceptors. It shares a non-heme iron and each subunit binds pheophytin, quinone, additional chlorophylls, carotenoids and lipids. There is also a Cl(-1) ion associated with D1 and D2, which is required for oxygen evolution. The PSII complex binds additional chlorophylls, carotenoids and specific lipids..

The protein localises to the host cellular thylakoid membrane. The catalysed reaction is 2 a plastoquinone + 4 hnu + 2 H2O = 2 a plastoquinol + O2. In terms of biological role, photosystem II (PSII) is a light-driven water:plastoquinone oxidoreductase that uses light energy to abstract electrons from H(2)O, generating O(2) and a proton gradient subsequently used for ATP formation. It consists of a core antenna complex that captures photons, and an electron transfer chain that converts photonic excitation into a charge separation. The D1/D2 (PsbA/PsbD) reaction center heterodimer binds P680, the primary electron donor of PSII as well as several subsequent electron acceptors. D2 is needed for assembly of a stable PSII complex. This Synechococcus protein is Photosystem II D2 protein (psbD).